The chain runs to 403 residues: Argininosuccinate synthase (403 aa).

Residues 12–20 and Ala39 contribute to the ATP site; that span reads AYSGGLDTS. Positions 91 and 96 each coordinate L-citrulline. Gly121 serves as a coordination point for ATP. 3 residues coordinate L-aspartate: Thr123, Asn127, and Asp128. Asn127 lines the L-citrulline pocket. L-citrulline-binding residues include Arg131, Ser180, Ser189, Glu265, and Tyr277.

The protein belongs to the argininosuccinate synthase family. Type 1 subfamily. Homotetramer.

It is found in the cytoplasm. It catalyses the reaction L-citrulline + L-aspartate + ATP = 2-(N(omega)-L-arginino)succinate + AMP + diphosphate + H(+). The protein operates within amino-acid biosynthesis; L-arginine biosynthesis; L-arginine from L-ornithine and carbamoyl phosphate: step 2/3. The polypeptide is Argininosuccinate synthase (Vibrio vulnificus (strain CMCP6)).